Consider the following 472-residue polypeptide: MSENNKNSLESSLRQLKCHFTWNLMEGENSLDDFEDKVFYRTEFQNREFKATMCNLLAYLKHLKGQNEAALECLRKAEELIQQEHADQAEIRSLVTWGNYAWVYYHMGRLSDVQIYVDKVKHVCEKFSSPYRIESPELDCEEGWTRLKCGGNQNERAKVCFEKALEKKPKNPEFTSGLAIASYRLDNWPPSQNAIDPLRQAIRLNPDNQYLKVLLALKLHKMREEGEEEGEGEKLVEEALEKAPGVTDVLRSAAKFYRRKDEPDKAIELLKKALEYIPNNAYLHCQIGCCYRAKVFQVMNLRENGMYGKRKLLELIGHAVAHLKKADEANDNLFRVCSILASLHALADQYEDAEYYFQKEFSKELTPVAKQLLHLRYGNFQLYQMKCEDKAIHHFIEGVKINQKSREKEKMKDKLQKIAKMRLSKNGADSEALHVLAFLQELNEKMQQADEDSERGLESGSLIPSASSWNGE.

N-acetylserine is present on Ser-2. 9 TPR repeats span residues 51–89 (ATMC…ADQA), 90–135 (EIRS…RIES), 136–171 (PELD…KPKN), 172–208 (PEFT…NPDN), 247–280 (TDVL…IPNN), 281–335 (AYLH…NLFR), 336–366 (VCSI…KELT), 367–405 (PVAK…NQKS), and 406–448 (REKE…KMQQ). The disordered stretch occupies residues 446–472 (MQQADEDSERGLESGSLIPSASSWNGE). Residues 462 to 472 (LIPSASSWNGE) are compositionally biased toward polar residues.

The protein belongs to the IFIT family. As to quaternary structure, domain-swapped homodimer. Component of an interferon-dependent multiprotein complex, at least composed of IFIT1, IFIT2 and IFIT3. Interacts with IFIT1 and IFIT3. Interacts with STING1/MITA and disrupts its interaction with MAVS or TBK1. Interacts with EIF3E and EIF3C.

It is found in the cytoplasm. It localises to the endoplasmic reticulum. Functionally, IFN-induced antiviral protein which inhibits expression of viral messenger RNAs lacking 2'-O-methylation of the 5' cap. The ribose 2'-O-methylation would provide a molecular signature to distinguish between self and non-self mRNAs by the host during viral infection. Viruses evolved several ways to evade this restriction system such as encoding their own 2'-O-methylase for their mRNAs or by stealing host cap containing the 2'-O-methylation (cap snatching mechanism). Binds AU-rich viral RNAs, with or without 5' triphosphorylation, RNA-binding is required for antiviral activity. Can promote apoptosis. This is Interferon-induced protein with tetratricopeptide repeats 2 (IFIT2) from Homo sapiens (Human).